Here is a 156-residue protein sequence, read N- to C-terminus: Small ribosomal subunit protein uS7 (156 aa).

The protein belongs to the universal ribosomal protein uS7 family. Part of the 30S ribosomal subunit. Contacts proteins S9 and S11.

Its function is as follows. One of the primary rRNA binding proteins, it binds directly to 16S rRNA where it nucleates assembly of the head domain of the 30S subunit. Is located at the subunit interface close to the decoding center, probably blocks exit of the E-site tRNA. The chain is Small ribosomal subunit protein uS7 from Kocuria rhizophila (strain ATCC 9341 / DSM 348 / NBRC 103217 / DC2201).